The primary structure comprises 660 residues: Pescadillo homolog (660 aa).

2 disordered regions span residues 313–358 and 471–660; these read VESD…SYSS and PELY…EKKA. A compositionally biased stretch (basic and acidic residues) spans 331 to 342; it reads EEKPSDAIDKFE. Positions 360-476 constitute a BRCT domain; that stretch reads DPAQLFSRLT…ELKSPELYGP (117 aa). Residues 501 to 659 are a coiled coil; that stretch reads LEEQQSEGEA…KRRRLEKEKK (159 aa). Positions 504–566 are enriched in acidic residues; it reads QQSEGEAIDA…EEGSEDEEES (63 aa). A compositionally biased stretch (basic and acidic residues) spans 584-619; the sequence is VKGDKKMDAKTKAKLEAKKALERKKKSEAEDLERAK.

Belongs to the pescadillo family. As to quaternary structure, component of the NOP7 complex, composed of ERB1, NOP7 and YTM1. The complex is held together by ERB1, which interacts with NOP7 via its N-terminal domain and with YTM1 via a high-affinity interaction between the seven-bladed beta-propeller domains of the 2 proteins. The NOP7 complex associates with the 66S pre-ribosome.

It is found in the nucleus. The protein resides in the nucleolus. The protein localises to the nucleoplasm. In terms of biological role, component of the NOP7 complex, which is required for maturation of the 25S and 5.8S ribosomal RNAs and formation of the 60S ribosome. The protein is Pescadillo homolog of Chaetomium globosum (strain ATCC 6205 / CBS 148.51 / DSM 1962 / NBRC 6347 / NRRL 1970) (Soil fungus).